Here is a 221-residue protein sequence, read N- to C-terminus: Endo-1,4-beta-xylanase 11A (221 aa).

The N-terminal stretch at 1 to 18 (MKFATVLAFATAAGAAFA) is a signal peptide. Residues 23–220 (SSETTEAGQL…GTGSASMSVS (198 aa)) enclose the GH11 domain. E111 acts as the Nucleophile in catalysis. The N-linked (GlcNAc...) asparagine glycan is linked to N117. Catalysis depends on E207, which acts as the Proton donor.

The protein belongs to the glycosyl hydrolase 11 (cellulase G) family.

The protein localises to the secreted. The catalysed reaction is Endohydrolysis of (1-&gt;4)-beta-D-xylosidic linkages in xylans.. Its pathway is glycan degradation; xylan degradation. Endo-1,4-beta-xylanase involved in the hydrolysis of xylan, a major structural heterogeneous polysaccharide found in plant biomass representing the second most abundant polysaccharide in the biosphere, after cellulose. The polypeptide is Endo-1,4-beta-xylanase 11A (XYN11A) (Mycosarcoma maydis (Corn smut fungus)).